A 365-amino-acid chain; its full sequence is 3-isopropylmalate dehydrogenase (365 aa).

Residue 80-93 participates in NAD(+) binding; sequence GPKWADNTGDQRPE. Substrate contacts are provided by R100, R110, R138, and D223. Mg(2+) contacts are provided by D223, D247, and D251. 280-292 provides a ligand contact to NAD(+); sequence GSAPDIAGQDVAN. Residues 337-365 are disordered; the sequence is NEEDASTSAFGREVATRAADSVPQNAPTP.

Belongs to the isocitrate and isopropylmalate dehydrogenases family. LeuB type 1 subfamily. As to quaternary structure, homodimer. It depends on Mg(2+) as a cofactor. Mn(2+) serves as cofactor.

The protein localises to the cytoplasm. It carries out the reaction (2R,3S)-3-isopropylmalate + NAD(+) = 4-methyl-2-oxopentanoate + CO2 + NADH. It functions in the pathway amino-acid biosynthesis; L-leucine biosynthesis; L-leucine from 3-methyl-2-oxobutanoate: step 3/4. In terms of biological role, catalyzes the oxidation of 3-carboxy-2-hydroxy-4-methylpentanoate (3-isopropylmalate) to 3-carboxy-4-methyl-2-oxopentanoate. The product decarboxylates to 4-methyl-2 oxopentanoate. The sequence is that of 3-isopropylmalate dehydrogenase from Salinibacter ruber (strain DSM 13855 / M31).